A 161-amino-acid polypeptide reads, in one-letter code: N5-carboxyaminoimidazole ribonucleotide mutase (161 aa).

Residues serine 9, aspartate 12, and arginine 39 each coordinate substrate.

It belongs to the AIR carboxylase family. Class I subfamily.

It carries out the reaction 5-carboxyamino-1-(5-phospho-D-ribosyl)imidazole + H(+) = 5-amino-1-(5-phospho-D-ribosyl)imidazole-4-carboxylate. It functions in the pathway purine metabolism; IMP biosynthesis via de novo pathway; 5-amino-1-(5-phospho-D-ribosyl)imidazole-4-carboxylate from 5-amino-1-(5-phospho-D-ribosyl)imidazole (N5-CAIR route): step 2/2. Catalyzes the conversion of N5-carboxyaminoimidazole ribonucleotide (N5-CAIR) to 4-carboxy-5-aminoimidazole ribonucleotide (CAIR). The chain is N5-carboxyaminoimidazole ribonucleotide mutase from Vibrio vulnificus (strain CMCP6).